The sequence spans 102 residues: Protein YcgL (102 aa).

The YcgL domain maps to 14–98 (MFCVIYRSSK…PPEDLLKQHL (85 aa)).

This is Protein YcgL from Salmonella agona (strain SL483).